The following is a 497-amino-acid chain: Guanosine-5'-triphosphate,3'-diphosphate pyrophosphatase (497 aa).

The protein belongs to the GppA/Ppx family. GppA subfamily.

It carries out the reaction guanosine 3'-diphosphate 5'-triphosphate + H2O = guanosine 3',5'-bis(diphosphate) + phosphate + H(+). Its pathway is purine metabolism; ppGpp biosynthesis; ppGpp from GTP: step 2/2. Its function is as follows. Catalyzes the conversion of pppGpp to ppGpp. Guanosine pentaphosphate (pppGpp) is a cytoplasmic signaling molecule which together with ppGpp controls the 'stringent response', an adaptive process that allows bacteria to respond to amino acid starvation, resulting in the coordinated regulation of numerous cellular activities. In Aliivibrio fischeri (strain ATCC 700601 / ES114) (Vibrio fischeri), this protein is Guanosine-5'-triphosphate,3'-diphosphate pyrophosphatase.